The chain runs to 385 residues: Rubredoxin-NAD(+) reductase (385 aa).

Residues alanine 8–alanine 11, serine 32–arginine 33, isoleucine 79, glutamate 156, aspartate 275, and isoleucine 293 contribute to the FAD site.

The protein belongs to the FAD-dependent oxidoreductase family. As to quaternary structure, homodimer. Requires FAD as cofactor.

The protein resides in the cytoplasm. It catalyses the reaction 2 reduced [rubredoxin] + NAD(+) + H(+) = 2 oxidized [rubredoxin] + NADH. It functions in the pathway hydrocarbon metabolism; alkane degradation. Involved in the hydrocarbon hydroxylating system, which transfers electrons from NADH to rubredoxin reductase and then through rubredoxin to alkane 1 monooxygenase. The chain is Rubredoxin-NAD(+) reductase (alkT) from Ectopseudomonas oleovorans (Pseudomonas oleovorans).